Consider the following 428-residue polypeptide: Phosphomethylpyrimidine synthase 2 (428 aa).

Substrate-binding positions include Asn65, Met94, Tyr123, His158, 180–182 (SRG), 221–224 (DGMR), and Glu260. His264 contacts Zn(2+). Tyr287 is a binding site for substrate. His328 is a Zn(2+) binding site. Residues Cys405, Cys408, and Cys412 each contribute to the [4Fe-4S] cluster site.

It belongs to the ThiC family. [4Fe-4S] cluster serves as cofactor.

It carries out the reaction 5-amino-1-(5-phospho-beta-D-ribosyl)imidazole + S-adenosyl-L-methionine = 4-amino-2-methyl-5-(phosphooxymethyl)pyrimidine + CO + 5'-deoxyadenosine + formate + L-methionine + 3 H(+). It participates in cofactor biosynthesis; thiamine diphosphate biosynthesis. Functionally, catalyzes the synthesis of the hydroxymethylpyrimidine phosphate (HMP-P) moiety of thiamine from aminoimidazole ribotide (AIR) in a radical S-adenosyl-L-methionine (SAM)-dependent reaction. The sequence is that of Phosphomethylpyrimidine synthase 2 from Methanosarcina barkeri (strain Fusaro / DSM 804).